The chain runs to 122 residues: MSLTNEKIVEAIAEKSIMEVMELVKAIEDKFGVSAAAPVMVSGSAAAAAPVEEQTEFTVTLKEAGAKKVEVIKAVRAVTGLGLKEAKDLTEAGGILKEAVSKEEAEKVKKELEAAGATVEVK.

Belongs to the bacterial ribosomal protein bL12 family. In terms of assembly, homodimer. Part of the ribosomal stalk of the 50S ribosomal subunit. Forms a multimeric L10(L12)X complex, where L10 forms an elongated spine to which 2 to 4 L12 dimers bind in a sequential fashion. Binds GTP-bound translation factors.

Forms part of the ribosomal stalk which helps the ribosome interact with GTP-bound translation factors. Is thus essential for accurate translation. This chain is Large ribosomal subunit protein bL12, found in Xylella fastidiosa (strain 9a5c).